Consider the following 514-residue polypeptide: Cytochrome P450 monooxygenase FUS8 (514 aa).

Residues 24-44 (VFENLTVTNTVCAFIALFIIV) traverse the membrane as a helical segment. Asparagine 225 and asparagine 443 each carry an N-linked (GlcNAc...) asparagine glycan. Cysteine 460 is a binding site for heme.

The protein belongs to the cytochrome P450 family. Heme is required as a cofactor.

It localises to the membrane. It functions in the pathway mycotoxin biosynthesis. Functionally, cytochrome P450 monooxygenase; part of the gene cluster that mediates the biosynthesis of the mycotoxin fusarin C. Within the cluster, FUS1, FUS2, FUS8 and FUS9 are sufficient for fusarin production. The roles of the other FUS members are yet undetermined. The fusarin C synthetase FUS1 is responsible for the condensation of one acetyl-coenzyme A (CoA) unit with six malonyl-CoA units and the amide linkage of the arising heptaketide and homoserine, subsequently releasing the first intermediate, prefusarin, as an alcohol with an open ring structure. The cytochrome P450 monooxygenase FUS8 participates in multiple oxidation processes at carbon C-20 and is able to use the FUS1 product as substrate, resulting in formation of 20-hydroxy-prefusarin. This reaction seems to be essential before the 2-pyrrolidone ring closure can be catalyzed by FUS2, generating 20-hydroxy-fusarin. FUS8 is able to further oxidizes carbon C-20 after ring closure, resulting in the formation of carboxy-fusarin C. As the last step, FUS9 methylates the hydroxyl group at C-21 to generate fusarin C. Fusarin C can then rearrange to epi-fusarin C, the (z)-isomers, and fusarin A and fusarin D. This is Cytochrome P450 monooxygenase FUS8 from Gibberella fujikuroi (strain CBS 195.34 / IMI 58289 / NRRL A-6831) (Bakanae and foot rot disease fungus).